Consider the following 328-residue polypeptide: UPF0421 protein SAUSA300_1870 (328 aa).

Helical transmembrane passes span 19 to 39, 61 to 81, 108 to 128, and 132 to 152; these read IAIF…IYAI, LPAT…FGDQ, VAVL…IFNF, and TLTA…VFPP.

Belongs to the UPF0421 family.

It localises to the cell membrane. This is UPF0421 protein SAUSA300_1870 from Staphylococcus aureus (strain USA300).